Here is a 257-residue protein sequence, read N- to C-terminus: Acyl-[acyl-carrier-protein]--UDP-N-acetylglucosamine O-acyltransferase (257 aa).

It belongs to the transferase hexapeptide repeat family. LpxA subfamily. Homotrimer.

It is found in the cytoplasm. The catalysed reaction is a (3R)-hydroxyacyl-[ACP] + UDP-N-acetyl-alpha-D-glucosamine = a UDP-3-O-[(3R)-3-hydroxyacyl]-N-acetyl-alpha-D-glucosamine + holo-[ACP]. It functions in the pathway glycolipid biosynthesis; lipid IV(A) biosynthesis; lipid IV(A) from (3R)-3-hydroxytetradecanoyl-[acyl-carrier-protein] and UDP-N-acetyl-alpha-D-glucosamine: step 1/6. Its function is as follows. Involved in the biosynthesis of lipid A, a phosphorylated glycolipid that anchors the lipopolysaccharide to the outer membrane of the cell. The polypeptide is Acyl-[acyl-carrier-protein]--UDP-N-acetylglucosamine O-acyltransferase (Anaeromyxobacter sp. (strain Fw109-5)).